We begin with the raw amino-acid sequence, 162 residues long: Lipoprotein signal peptidase (162 aa).

2 helical membrane passes run 66-86 (PFFI…FRKL) and 92-112 (LAAV…IDRV). Active-site residues include D119 and D137. The chain crosses the membrane as a helical span at residues 132-152 (AFNVADSAICVGVALLALDMI).

The protein belongs to the peptidase A8 family.

The protein localises to the cell inner membrane. It catalyses the reaction Release of signal peptides from bacterial membrane prolipoproteins. Hydrolyzes -Xaa-Yaa-Zaa-|-(S,diacylglyceryl)Cys-, in which Xaa is hydrophobic (preferably Leu), and Yaa (Ala or Ser) and Zaa (Gly or Ala) have small, neutral side chains.. It functions in the pathway protein modification; lipoprotein biosynthesis (signal peptide cleavage). Functionally, this protein specifically catalyzes the removal of signal peptides from prolipoproteins. In Geobacter metallireducens (strain ATCC 53774 / DSM 7210 / GS-15), this protein is Lipoprotein signal peptidase.